A 258-amino-acid chain; its full sequence is Very-long-chain aldehyde decarbonylase GL1-9 (258 aa).

Transmembrane regions (helical) follow at residues 13–33 (MGTF…QLVL), 63–83 (GVLL…MVTS), 88–108 (VVVQ…MLVM), 149–169 (PLEG…VSGM), and 175–195 (VFFF…LWLP). One can recognise a Fatty acid hydroxylase domain in the interval 101-237 (FLVAMLVMDS…FSIWDRILGT (137 aa)).

The protein belongs to the sterol desaturase family. In terms of assembly, homodimer.

It localises to the endoplasmic reticulum membrane. It carries out the reaction a long-chain fatty aldehyde + 2 NADPH + O2 + H(+) = a long-chain alkane + formate + 2 NADP(+) + H2O. In terms of biological role, aldehyde decarbonylase involved in the conversion of aldehydes to alkanes. Core component of a very-long-chain alkane synthesis complex. The polypeptide is Very-long-chain aldehyde decarbonylase GL1-9 (Oryza sativa subsp. indica (Rice)).